The sequence spans 387 residues: Patatin-05 (387 aa).

The first 23 residues, 1–23, serve as a signal peptide directing secretion; sequence MATTKSVLVLIFMILATTSSTFA. Residues 32–230 enclose the PNPLA domain; that stretch reads LSIDGGGIKG…TVADPALLSV (199 aa). The GXGXXG motif lies at 36–41; that stretch reads GGGIKG. A GXSXG motif is present at residues 75 to 79; that stretch reads GTSTG. Residue Ser77 is the Nucleophile of the active site. N-linked (GlcNAc...) asparagine glycosylation is found at Asn115 and Asn203. Asp216 serves as the catalytic Proton acceptor. A DGA/G motif is present at residues 216–218; that stretch reads DGA.

Belongs to the patatin family. Tuber.

Its subcellular location is the vacuole. Its function is as follows. Probable lipolytic acyl hydrolase (LAH), an activity which is thought to be involved in the response of tubers to pathogens. The protein is Patatin-05 (pat1-k1) of Solanum tuberosum (Potato).